A 452-amino-acid polypeptide reads, in one-letter code: Gastrin/cholecystokinin type B receptor (452 aa).

Over 1 to 55 (MELVKLNRSVQGSGPVASLCRPGGPLLNNSGTGNLSCEPPRIRGAGTRELELAIR) the chain is Extracellular. N-linked (GlcNAc...) asparagine glycosylation is found at asparagine 7, asparagine 28, and asparagine 34. Residues 56-77 (VTLYAVIFLMSVGGNILIIVVL) traverse the membrane as a helical segment. Residues 78-85 (GLSRRLRT) lie on the Cytoplasmic side of the membrane. Residues 86-107 (VTNAFLLSLAVSDLLLAVACMP) traverse the membrane as a helical segment. Topologically, residues 108–129 (FTLLPNLMGTFIFGTVICKAVS) are extracellular. A disulfide bridge connects residues cysteine 125 and cysteine 203. The chain crosses the membrane as a helical span at residues 130 to 148 (YLMGVSVSVSTLSLVAIAL). At 149–168 (ERYSAICRPLQARVWQTRSH) the chain is on the cytoplasmic side. A helical membrane pass occupies residues 169-187 (AARVILATWLLSGLLMVPY). Over 188-217 (PVYTAVQPVGPRVLQCVHRWPSARVRQTWS) the chain is Extracellular. A helical transmembrane segment spans residues 218-240 (VLLLLLLFFVPGVVMAVAYGLIS). At 241 to 338 (RELYLGLRFD…KLLAKKRVVR (98 aa)) the chain is on the cytoplasmic side. The disordered stretch occupies residues 255 to 285 (SESQSRVRGQGGLPGGAAPGPVHQNGRCRPE). Residues 263 to 272 (GQGGLPGGAA) show a composition bias toward gly residues. Residues 339–360 (MLLVIVVLFFMCWLPVYSANTW) form a helical membrane-spanning segment. The Extracellular segment spans residues 361 to 378 (RAFDGPGAHRALSGAPIS). The helical transmembrane segment at 379-399 (FIHLLSYASACVNPLVYCFMH) threads the bilayer. Topologically, residues 400 to 452 (RRFRQACLDTCARCCPRPPRARPRPLPDEDPPTPSIASLSRLSYTTISTLGPG) are cytoplasmic. The S-palmitoyl cysteine moiety is linked to residue cysteine 413.

This sequence belongs to the G-protein coupled receptor 1 family.

It is found in the cell membrane. In terms of biological role, receptor for gastrin and cholecystokinin. The CCK-B receptors occur throughout the central nervous system where they modulate anxiety, analgesia, arousal, and neuroleptic activity. This receptor mediates its action by association with G proteins that activate a phosphatidylinositol-calcium second messenger system. This chain is Gastrin/cholecystokinin type B receptor (CCKBR), found in Oryctolagus cuniculus (Rabbit).